A 531-amino-acid polypeptide reads, in one-letter code: Squalene epoxidase 1 (531 aa).

The helical transmembrane segment at 9–29 (ILPLLISSLLISFVAFYGFFV) threads the bilayer. FAD contacts are provided by residues 70–71 (VA), 90–91 (ER), arginine 98, arginine 169, valine 185, aspartate 347, and methionine 360. Transmembrane regions (helical) follow at residues 458–478 (LVCH…IPFP) and 483–503 (IWLG…IIKA).

The protein belongs to the squalene monooxygenase family. FAD serves as cofactor. Expressed in seedlings, leaves, stems, inflorescences, sepals, style and siliques. Expressed in expanded cotyledons, root tips and cortical cells of the root elongation zone, but not in root hair cells. In leaves, expressed in most cells, with a very strong expression in stomata.

It is found in the membrane. The enzyme catalyses squalene + reduced [NADPH--hemoprotein reductase] + O2 = (S)-2,3-epoxysqualene + oxidized [NADPH--hemoprotein reductase] + H2O + H(+). The protein operates within terpene metabolism; lanosterol biosynthesis; lanosterol from farnesyl diphosphate: step 2/3. In terms of biological role, catalyzes the stereospecific oxidation of squalene to (S)-2,3-epoxysqualene, and is considered to be a rate-limiting enzyme in steroid biosynthesis. Can produce not only oxidosqualene, but also 2,3:22,23-dioxidosqualene. Main squalene epoxidase in the root. Sqe1 mutants may show defects in membrane lipid rafts, impairing the correct localization of RHD2 NADPH oxidase and the proper polarized production of ROS. This chain is Squalene epoxidase 1 (SQE1), found in Arabidopsis thaliana (Mouse-ear cress).